We begin with the raw amino-acid sequence, 472 residues long: Ribosomal protein uS12 methylthiotransferase RimO (472 aa).

An MTTase N-terminal domain is found at 33-143 (NRIGFVSLGC…VLKHVHKYVP (111 aa)). Residues cysteine 42, cysteine 78, cysteine 107, cysteine 175, cysteine 179, and cysteine 182 each coordinate [4Fe-4S] cluster. One can recognise a Radical SAM core domain in the interval 161 to 398 (LTPKHYAYLK…MEVQAEISAE (238 aa)). The region spanning 401-467 (ARFVGRTLDI…EHDLWAEVVD (67 aa)) is the TRAM domain.

It belongs to the methylthiotransferase family. RimO subfamily. [4Fe-4S] cluster serves as cofactor.

It is found in the cytoplasm. The enzyme catalyses L-aspartate(89)-[ribosomal protein uS12]-hydrogen + (sulfur carrier)-SH + AH2 + 2 S-adenosyl-L-methionine = 3-methylsulfanyl-L-aspartate(89)-[ribosomal protein uS12]-hydrogen + (sulfur carrier)-H + 5'-deoxyadenosine + L-methionine + A + S-adenosyl-L-homocysteine + 2 H(+). Functionally, catalyzes the methylthiolation of an aspartic acid residue of ribosomal protein uS12. In Shewanella baltica (strain OS195), this protein is Ribosomal protein uS12 methylthiotransferase RimO.